A 594-amino-acid polypeptide reads, in one-letter code: Bifunctional lycopene cyclase/phytoene synthase (594 aa).

The lycopene beta-cyclase stretch occupies residues 1–249 (MGLDYLMVHV…VVFGIAAMHN (249 aa)). Helical transmembrane passes span 3–23 (LDYLMVHVKYNLPPALLLTIL), 35–55 (KIVLLCTIAVVWTIPWDSYLI), 77–97 (LEEVFFFIIQTYNTSLLYIIF), 130–150 (LGTLFFTGILILGISFIYIGG), 153–173 (MYLGLILSWVSPILVMQWVLM), 176–196 (FLLALPPASVWVPIALPTLYL), and 227–247 (IEEALFFLVTNVMVVFGIAAM). A phytoene synthase region spans residues 256–594 (YKAFISTTAM…RFKRAWLAML (339 aa)).

The protein in the N-terminal section; belongs to the lycopene beta-cyclase family. This sequence in the C-terminal section; belongs to the phytoene/squalene synthase family.

It localises to the membrane. It catalyses the reaction all-trans-lycopene = gamma-carotene. It carries out the reaction gamma-carotene = all-trans-beta-carotene. The catalysed reaction is 2 (2E,6E,10E)-geranylgeranyl diphosphate = 15-cis-phytoene + 2 diphosphate. It participates in carotenoid biosynthesis; beta-carotene biosynthesis. The protein operates within carotenoid biosynthesis; phytoene biosynthesis; all-trans-phytoene from geranylgeranyl diphosphate: step 1/1. Bifunctional enzyme that catalyzes the reactions from geranylgeranyl diphosphate to phytoene (phytoene synthase) and lycopene to beta-carotene via the intermediate gamma-carotene (lycopene cyclase). In Arthroderma gypseum (strain ATCC MYA-4604 / CBS 118893) (Microsporum gypseum), this protein is Bifunctional lycopene cyclase/phytoene synthase.